Here is a 238-residue protein sequence, read N- to C-terminus: Immunoglobulin superfamily member 6 (238 aa).

A signal peptide spans 1–27; sequence MGPVSTSRRGLRLGISLILLQVGVVGA. Residues 28 to 153 lie on the Extracellular side of the membrane; that stretch reads CTVSVLQPGY…RLFSREVHSL (126 aa). The region spanning 30–134 is the Ig-like C2-type domain; it reads VSVLQPGYLE…EPVPTAKQTG (105 aa). Cys-51 and Cys-118 are disulfide-bonded. Residues 154–174 traverse the membrane as a helical segment; that stretch reads LIVLLALLAVYVTGVCVIFIV. Residues 175-238 are Cytoplasmic-facing; it reads LFRSKSNTPR…RKALPSPGRP (64 aa). Over residues 215–230 the composition is skewed to basic and acidic residues; sequence ETSHQPEQDGNYENRK. The tract at residues 215–238 is disordered; it reads ETSHQPEQDGNYENRKALPSPGRP.

It is found in the membrane. This Rattus norvegicus (Rat) protein is Immunoglobulin superfamily member 6 (Igsf6).